Consider the following 202-residue polypeptide: 3-isopropylmalate dehydratase small subunit 2 (202 aa).

The protein belongs to the LeuD family. LeuD type 1 subfamily. Heterodimer of LeuC and LeuD.

The enzyme catalyses (2R,3S)-3-isopropylmalate = (2S)-2-isopropylmalate. It functions in the pathway amino-acid biosynthesis; L-leucine biosynthesis; L-leucine from 3-methyl-2-oxobutanoate: step 2/4. Catalyzes the isomerization between 2-isopropylmalate and 3-isopropylmalate, via the formation of 2-isopropylmaleate. The polypeptide is 3-isopropylmalate dehydratase small subunit 2 (Bordetella parapertussis (strain 12822 / ATCC BAA-587 / NCTC 13253)).